A 196-amino-acid polypeptide reads, in one-letter code: Holliday junction branch migration complex subunit RuvA (196 aa).

Positions 1–62 (MYEYINGLIT…ENDISLYGFI (62 aa)) are domain I. The interval 63–141 (DADEKALFNK…ELASKTGMVD (79 aa)) is domain II. The tract at residues 142–148 (SSSNPEQ) is flexible linker. The tract at residues 148–196 (QSQALDDALEALLALGYTAKDVKAVAQIIGRNSDTTDGYIRSALKLLVK) is domain III.

The protein belongs to the RuvA family. Homotetramer. Forms an RuvA(8)-RuvB(12)-Holliday junction (HJ) complex. HJ DNA is sandwiched between 2 RuvA tetramers; dsDNA enters through RuvA and exits via RuvB. An RuvB hexamer assembles on each DNA strand where it exits the tetramer. Each RuvB hexamer is contacted by two RuvA subunits (via domain III) on 2 adjacent RuvB subunits; this complex drives branch migration. In the full resolvosome a probable DNA-RuvA(4)-RuvB(12)-RuvC(2) complex forms which resolves the HJ.

Its subcellular location is the cytoplasm. Its function is as follows. The RuvA-RuvB-RuvC complex processes Holliday junction (HJ) DNA during genetic recombination and DNA repair, while the RuvA-RuvB complex plays an important role in the rescue of blocked DNA replication forks via replication fork reversal (RFR). RuvA specifically binds to HJ cruciform DNA, conferring on it an open structure. The RuvB hexamer acts as an ATP-dependent pump, pulling dsDNA into and through the RuvAB complex. HJ branch migration allows RuvC to scan DNA until it finds its consensus sequence, where it cleaves and resolves the cruciform DNA. The chain is Holliday junction branch migration complex subunit RuvA from Leuconostoc mesenteroides subsp. mesenteroides (strain ATCC 8293 / DSM 20343 / BCRC 11652 / CCM 1803 / JCM 6124 / NCDO 523 / NBRC 100496 / NCIMB 8023 / NCTC 12954 / NRRL B-1118 / 37Y).